The sequence spans 309 residues: UDP-3-O-acyl-N-acetylglucosamine deacetylase (309 aa).

The Zn(2+) site is built by H78, H237, and D241. The active-site Proton donor is the H264.

Belongs to the LpxC family. Requires Zn(2+) as cofactor.

The catalysed reaction is a UDP-3-O-[(3R)-3-hydroxyacyl]-N-acetyl-alpha-D-glucosamine + H2O = a UDP-3-O-[(3R)-3-hydroxyacyl]-alpha-D-glucosamine + acetate. The protein operates within glycolipid biosynthesis; lipid IV(A) biosynthesis; lipid IV(A) from (3R)-3-hydroxytetradecanoyl-[acyl-carrier-protein] and UDP-N-acetyl-alpha-D-glucosamine: step 2/6. Functionally, catalyzes the hydrolysis of UDP-3-O-myristoyl-N-acetylglucosamine to form UDP-3-O-myristoylglucosamine and acetate, the committed step in lipid A biosynthesis. This is UDP-3-O-acyl-N-acetylglucosamine deacetylase from Methylobacillus flagellatus (strain ATCC 51484 / DSM 6875 / VKM B-1610 / KT).